We begin with the raw amino-acid sequence, 121 residues long: CRISPR system Cms protein Csm2 (121 aa).

The protein belongs to the CRISPR-associated Csm2 family. Part of the Csm effector complex that includes at least Cas10(1), Csm2(3), Csm3(5), Csm4(1), Csm5(1) and mature crRNA. The Csm complex is elongated and slightly twisted with a maximal length of 215 Angstroms and a diameter of 75-80 Angstroms. It has been modeled to have a central protein filamant of Csm3 subunits along which the dsRNA helix of paired crRNA and target RNA binds. The filament is capped at one end by Cas10 and Csm4 and at the other end by Csm5; ssDNA is thought to bind to the N-terminal HD domain of Cas10. Csm with a precursor crRNA does not include Csm5, while Cas6, the enzyme probably involved in pre-crRNA processing, is found associated with a subset of the Csm complex.

Its function is as follows. CRISPR (clustered regularly interspaced short palindromic repeat) is an adaptive immune system that provides protection against mobile genetic elements (viruses, transposable elements and conjugative plasmids). CRISPR clusters contain spacers, sequences complementary to antecedent mobile elements, and target invading nucleic acids. CRISPR clusters are transcribed and processed into CRISPR RNA (crRNA). The type III-A Csm effector complex binds crRNA and acts as a crRNA-guided RNase, DNase and cyclic oligoadenylate synthase; binding of target RNA cognate to the crRNA is required for all activities. In a heterologous host this Csm effector complex restricts ssRNA phage MS2, suggesting it may target RNA viruses in vivo. In terms of biological role, csm functions as a non-specific ssDNase. Base-pairing between crRNA and target RNA to form a ternary Csm complex activates a ssDNase activity; target RNA cleavage suppresses the ssDNase, a temporal control that prevents uncontrolled DNA degradation. Viral RNA transcripts probably tether the Csm complex to the viral genome, recruiting Cas10 ssDNA activity which is able to degrade DNA in the transcription bubble, spatially controlling the DNase activity. This subunit may be involved in monitoring complementarity of crRNA and target RNA. The protein is CRISPR system Cms protein Csm2 of Streptococcus thermophilus.